We begin with the raw amino-acid sequence, 457 residues long: tRNA-2-methylthio-N(6)-dimethylallyladenosine synthase (457 aa).

In terms of domain architecture, MTTase N-terminal spans 3–120; the sequence is KKVYVKTFGC…LPQMIDARRT (118 aa). Residues C12, C49, C83, C157, C161, and C164 each coordinate [4Fe-4S] cluster. The region spanning 143–377 is the Radical SAM core domain; it reads RVEGPTAFVS…QATIEENVAR (235 aa). Residues 380–447 enclose the TRAM domain; sequence QSMVGKVERI…PHSLRGELVL (68 aa).

This sequence belongs to the methylthiotransferase family. MiaB subfamily. As to quaternary structure, monomer. The cofactor is [4Fe-4S] cluster.

It is found in the cytoplasm. The enzyme catalyses N(6)-dimethylallyladenosine(37) in tRNA + (sulfur carrier)-SH + AH2 + 2 S-adenosyl-L-methionine = 2-methylsulfanyl-N(6)-dimethylallyladenosine(37) in tRNA + (sulfur carrier)-H + 5'-deoxyadenosine + L-methionine + A + S-adenosyl-L-homocysteine + 2 H(+). Functionally, catalyzes the methylthiolation of N6-(dimethylallyl)adenosine (i(6)A), leading to the formation of 2-methylthio-N6-(dimethylallyl)adenosine (ms(2)i(6)A) at position 37 in tRNAs that read codons beginning with uridine. In Burkholderia multivorans (strain ATCC 17616 / 249), this protein is tRNA-2-methylthio-N(6)-dimethylallyladenosine synthase.